The following is a 301-amino-acid chain: UDP-N-acetylenolpyruvoylglucosamine reductase (301 aa).

The FAD-binding PCMH-type domain occupies 24–190; sequence RVGGLAQFYD…VSAQLQLQPG (167 aa). The active site involves Arg169. The active-site Proton donor is Ser220. The active site involves Glu290.

The protein belongs to the MurB family. It depends on FAD as a cofactor.

The protein resides in the cytoplasm. It catalyses the reaction UDP-N-acetyl-alpha-D-muramate + NADP(+) = UDP-N-acetyl-3-O-(1-carboxyvinyl)-alpha-D-glucosamine + NADPH + H(+). The protein operates within cell wall biogenesis; peptidoglycan biosynthesis. In terms of biological role, cell wall formation. The chain is UDP-N-acetylenolpyruvoylglucosamine reductase from Synechococcus sp. (strain ATCC 27144 / PCC 6301 / SAUG 1402/1) (Anacystis nidulans).